The chain runs to 223 residues: Urease accessory protein UreF (223 aa).

The protein belongs to the UreF family. In terms of assembly, ureD, UreF and UreG form a complex that acts as a GTP-hydrolysis-dependent molecular chaperone, activating the urease apoprotein by helping to assemble the nickel containing metallocenter of UreC. The UreE protein probably delivers the nickel.

It is found in the cytoplasm. Required for maturation of urease via the functional incorporation of the urease nickel metallocenter. The polypeptide is Urease accessory protein UreF (Rhizobium leguminosarum bv. viciae).